A 294-amino-acid polypeptide reads, in one-letter code: Cytidine deaminase (294 aa).

2 CMP/dCMP-type deaminase domains span residues 48 to 168 (DDDA…FGPT) and 187 to 294 (AETD…RVTF). Substrate is bound at residue 89–91 (NME). His-102 contacts Zn(2+). Glu-104 serves as the catalytic Proton donor. Cys-129 and Cys-132 together coordinate Zn(2+).

Belongs to the cytidine and deoxycytidylate deaminase family. As to quaternary structure, homodimer. Zn(2+) serves as cofactor.

It catalyses the reaction cytidine + H2O + H(+) = uridine + NH4(+). The catalysed reaction is 2'-deoxycytidine + H2O + H(+) = 2'-deoxyuridine + NH4(+). Its function is as follows. This enzyme scavenges exogenous and endogenous cytidine and 2'-deoxycytidine for UMP synthesis. This chain is Cytidine deaminase, found in Yersinia pseudotuberculosis serotype IB (strain PB1/+).